Here is a 957-residue protein sequence, read N- to C-terminus: Glycine dehydrogenase (decarboxylating) (957 aa).

Lysine 708 is subject to N6-(pyridoxal phosphate)lysine.

Belongs to the GcvP family. The glycine cleavage system is composed of four proteins: P, T, L and H. Requires pyridoxal 5'-phosphate as cofactor.

The catalysed reaction is N(6)-[(R)-lipoyl]-L-lysyl-[glycine-cleavage complex H protein] + glycine + H(+) = N(6)-[(R)-S(8)-aminomethyldihydrolipoyl]-L-lysyl-[glycine-cleavage complex H protein] + CO2. In terms of biological role, the glycine cleavage system catalyzes the degradation of glycine. The P protein binds the alpha-amino group of glycine through its pyridoxal phosphate cofactor; CO(2) is released and the remaining methylamine moiety is then transferred to the lipoamide cofactor of the H protein. The sequence is that of Glycine dehydrogenase (decarboxylating) from Escherichia coli O6:H1 (strain CFT073 / ATCC 700928 / UPEC).